A 461-amino-acid polypeptide reads, in one-letter code: Protein YIG1 (461 aa).

A disordered region spans residues 58 to 80 (SNVGEDGGDVGNYSEEDDDGDEE). Acidic residues predominate over residues 71-80 (SEEDDDGDEE).

Its subcellular location is the cytoplasm. It is found in the nucleus. In terms of biological role, involved in the regulation of anaerobiotic glycerol metabolism. This chain is Protein YIG1 (YIG1), found in Saccharomyces cerevisiae (strain ATCC 204508 / S288c) (Baker's yeast).